A 927-amino-acid chain; its full sequence is Sodium/calcium exchanger 3 (927 aa).

A signal peptide spans methionine 1–alanine 30. Residues glutamate 31 to lysine 73 lie on the Extracellular side of the membrane. N-linked (GlcNAc...) asparagine glycosylation occurs at asparagine 45. A helical membrane pass occupies residues isoleucine 74 to isoleucine 94. At alanine 95–glutamate 147 the chain is on the cytoplasmic side. Residues alanine 140–isoleucine 180 form an Alpha-1 repeat. A helical transmembrane segment spans residues isoleucine 148–serine 168. A topological domain (extracellular) is located at residue threonine 169. A helical transmembrane segment spans residues isoleucine 170–proline 190. Topologically, residues aspartate 191 to valine 202 are cytoplasmic. Residues phenylalanine 203–valine 223 form a helical membrane-spanning segment. Residues phenylalanine 224 to glutamine 230 lie on the Extracellular side of the membrane. The helical transmembrane segment at valine 231–alanine 251 threads the bilayer. Residues aspartate 252–serine 726 are Cytoplasmic-facing. The interval lysine 253 to glycine 272 is putative calmodulin-binding region. 2 consecutive Calx-beta domains span residues valine 386–serine 485 and alanine 519–glycine 619. Ca(2+) contacts are provided by glutamate 409, aspartate 445, aspartate 470, aspartate 471, isoleucine 473, glutamate 475, glutamate 478, aspartate 525, aspartate 526, aspartate 527, glutamate 543, aspartate 579, glutamate 606, glutamate 607, and glutamate 672. Residues cysteine 727–proline 747 form a helical membrane-spanning segment. Residues proline 748 to glycine 754 are Extracellular-facing. Residues tryptophan 755–leucine 775 traverse the membrane as a helical segment. The Cytoplasmic portion of the chain corresponds to alanine 776–histidine 778. A helical transmembrane segment spans residues phenylalanine 779 to threonine 799. One copy of the Alpha-2 repeat lies at alanine 796–valine 832. Topologically, residues serine 800–asparagine 828 are extracellular. Asparagine 823 carries an N-linked (GlcNAc...) asparagine glycan. Residues alanine 829–leucine 849 traverse the membrane as a helical segment. Residues glutamine 850 to threonine 860 are Cytoplasmic-facing. A helical transmembrane segment spans residues leucine 861–tyrosine 881. The Extracellular portion of the chain corresponds to arginine 882–tryptophan 903. The helical transmembrane segment at leucine 904–isoleucine 924 threads the bilayer. Topologically, residues lysine 925 to phenylalanine 927 are cytoplasmic.

The protein belongs to the Ca(2+):cation antiporter (CaCA) (TC 2.A.19) family. SLC8 subfamily. In terms of assembly, interacts with AKAP1. In terms of tissue distribution, isoform 2 is expressed in brain and skeletal muscle. Isoform 3 is expressed in excitable cells of brain, retina and skeletal muscle. Isoform 4 is expressed in skeletal muscle.

The protein localises to the cell membrane. Its subcellular location is the perikaryon. It localises to the cell projection. It is found in the dendrite. The protein resides in the dendritic spine. The protein localises to the sarcolemma. Its subcellular location is the cytoplasm. It localises to the sarcoplasm. It is found in the cell junction. The protein resides in the mitochondrion outer membrane. The protein localises to the perinuclear region. Its subcellular location is the endoplasmic reticulum membrane. The enzyme catalyses Ca(2+)(in) + 3 Na(+)(out) = Ca(2+)(out) + 3 Na(+)(in). Calcium transport is down-regulated by Na(+) and stimulated by Ca(2+). In terms of biological role, mediates the electrogenic exchange of Ca(2+) against Na(+) ions across the cell membrane, and thereby contributes to the regulation of cytoplasmic Ca(2+) levels and Ca(2+)-dependent cellular processes. Contributes to cellular Ca(2+) homeostasis in excitable cells, both in muscle and in brain. In a first phase, voltage-gated channels mediate the rapid increase of cytoplasmic Ca(2+) levels due to release of Ca(2+) stores from the endoplasmic reticulum. SLC8A3 mediates the export of Ca(2+) from the cell during the next phase, so that cytoplasmic Ca(2+) levels rapidly return to baseline. Contributes to Ca(2+) transport during excitation-contraction coupling in muscle. In neurons, contributes to the rapid decrease of cytoplasmic Ca(2+) levels back to baseline after neuronal activation, and thereby contributes to modulate synaptic plasticity, learning and memory. Required for normal oligodendrocyte differentiation and for normal myelination. Mediates Ca(2+) efflux from mitochondria and contributes to mitochondrial Ca(2+) ion homeostasis. The protein is Sodium/calcium exchanger 3 (SLC8A3) of Homo sapiens (Human).